A 233-amino-acid chain; its full sequence is RNA/RNP complex-1-interacting phosphatase homolog (233 aa).

Over residues Met-1–Pro-14 the composition is skewed to basic residues. The disordered stretch occupies residues Met-1–Pro-21. In terms of domain architecture, Tyrosine-protein phosphatase spans Asn-34–Tyr-206. Cys-150 acts as the Phosphocysteine intermediate in catalysis. Thr-151–Arg-156 contributes to the substrate binding site. Arg-156 serves as the catalytic Proton donor/acceptor. The disordered stretch occupies residues Lys-204–Gln-233. A compositionally biased stretch (low complexity) spans Lys-208–Ser-217. Residues Ala-218–Gln-233 show a composition bias toward polar residues.

It belongs to the protein-tyrosine phosphatase family. Non-receptor class dual specificity subfamily. In terms of assembly, interacts with the ERI/DICER complex component dcr-1. Interacts with ERI/DICER complex components rrf-3 and isoform b of eri-1. Interacts with drh-3 and rde-8.

It is found in the cytoplasm. The protein localises to the nucleus. Functionally, RNA polyphosphatase which has RNA 5'-triphosphatase and diphosphatase activities. Displays poor protein-tyrosine phosphatase activity. Binds to 5'-triphosphorylated RNAs (also called ppp-RNAs). Dephosphorylates ppp-RNAs converting them to 5'-monophosphorylated RNAs (also called p-RNAs). During small-RNA-mediated gene-silencing or RNA interference (RNAi), involved in the dcr-1-mediated processing of an amplified dsRNA intermediate. This is most likely in association with several components of the ERI/DICER complex including dcr-1, eri-1 and rrf-3. Plays a role in the biogenesis of 26G small interfering RNAs (26G-siRNAs), which are a class of 26 nucleotide siRNAs that possess a guanine residue at the 5'-end, by dephosphorylating 5'-triphosphorylated 26G-siRNAs prior to their maturation by the ERI/DICER complex. Plays a role in the biogenesis of csr-1-bound 22G small interfering RNAs (22G-siRNAs), which are a class of 22 nucleotide siRNAs that possess a guanine residue at the 5'-end. Not required for the biogenesis of microRNAs (miRNA) or for the biogenesis of a class of 21 nucleotide PIWI-interacting RNAs (piRNAs) that possess a uracil residue at the 5'-end (also called 21U-RNAs). This is RNA/RNP complex-1-interacting phosphatase homolog from Caenorhabditis elegans.